A 146-amino-acid polypeptide reads, in one-letter code: Anti-sigma F factor (146 aa).

Belongs to the anti-sigma-factor family.

It catalyses the reaction L-seryl-[protein] + ATP = O-phospho-L-seryl-[protein] + ADP + H(+). The catalysed reaction is L-threonyl-[protein] + ATP = O-phospho-L-threonyl-[protein] + ADP + H(+). Its function is as follows. Binds to sigma F and blocks its ability to form an RNA polymerase holoenzyme (E-sigma F). Phosphorylates SpoIIAA on a serine residue. This phosphorylation may enable SpoIIAA to act as an anti-anti-sigma factor that counteracts SpoIIAB and thus releases sigma F from inhibition. This Bacillus licheniformis (strain ATCC 14580 / DSM 13 / JCM 2505 / CCUG 7422 / NBRC 12200 / NCIMB 9375 / NCTC 10341 / NRRL NRS-1264 / Gibson 46) protein is Anti-sigma F factor.